A 207-amino-acid polypeptide reads, in one-letter code: Thiamine-phosphate synthase (207 aa).

4-amino-2-methyl-5-(diphosphooxymethyl)pyrimidine contacts are provided by residues 36–40 (QMRIK) and D68. Residues D69 and D88 each coordinate Mg(2+). A 4-amino-2-methyl-5-(diphosphooxymethyl)pyrimidine-binding site is contributed by S106. 2-[(2R,5Z)-2-carboxy-4-methylthiazol-5(2H)-ylidene]ethyl phosphate is bound at residue 132 to 134 (TKT). A 4-amino-2-methyl-5-(diphosphooxymethyl)pyrimidine-binding site is contributed by K135. Residues G162 and 182–183 (IS) contribute to the 2-[(2R,5Z)-2-carboxy-4-methylthiazol-5(2H)-ylidene]ethyl phosphate site.

Belongs to the thiamine-phosphate synthase family. Mg(2+) is required as a cofactor.

The enzyme catalyses 2-[(2R,5Z)-2-carboxy-4-methylthiazol-5(2H)-ylidene]ethyl phosphate + 4-amino-2-methyl-5-(diphosphooxymethyl)pyrimidine + 2 H(+) = thiamine phosphate + CO2 + diphosphate. It carries out the reaction 2-(2-carboxy-4-methylthiazol-5-yl)ethyl phosphate + 4-amino-2-methyl-5-(diphosphooxymethyl)pyrimidine + 2 H(+) = thiamine phosphate + CO2 + diphosphate. It catalyses the reaction 4-methyl-5-(2-phosphooxyethyl)-thiazole + 4-amino-2-methyl-5-(diphosphooxymethyl)pyrimidine + H(+) = thiamine phosphate + diphosphate. Its pathway is cofactor biosynthesis; thiamine diphosphate biosynthesis; thiamine phosphate from 4-amino-2-methyl-5-diphosphomethylpyrimidine and 4-methyl-5-(2-phosphoethyl)-thiazole: step 1/1. In terms of biological role, condenses 4-methyl-5-(beta-hydroxyethyl)thiazole monophosphate (THZ-P) and 2-methyl-4-amino-5-hydroxymethyl pyrimidine pyrophosphate (HMP-PP) to form thiamine monophosphate (TMP). The sequence is that of Thiamine-phosphate synthase from Pyrococcus furiosus (strain ATCC 43587 / DSM 3638 / JCM 8422 / Vc1).